A 201-amino-acid chain; its full sequence is Small ribosomal subunit protein uS4c (201 aa).

Residues 20-43 (GLTSKRPRAGSDLRNQSRSGKRSQ) are disordered. Positions 89–149 (MRLDNILFRL…DEQKSRALIQ (61 aa)) constitute an S4 RNA-binding domain.

Belongs to the universal ribosomal protein uS4 family. As to quaternary structure, part of the 30S ribosomal subunit. Contacts protein S5. The interaction surface between S4 and S5 is involved in control of translational fidelity.

It localises to the plastid. Its subcellular location is the chloroplast. One of the primary rRNA binding proteins, it binds directly to 16S rRNA where it nucleates assembly of the body of the 30S subunit. Functionally, with S5 and S12 plays an important role in translational accuracy. In Buxus microphylla (Littleleaf boxwood), this protein is Small ribosomal subunit protein uS4c (rps4).